Reading from the N-terminus, the 101-residue chain is Small ribosomal subunit protein uS14 (101 aa).

It belongs to the universal ribosomal protein uS14 family. In terms of assembly, part of the 30S ribosomal subunit. Contacts proteins S3 and S10.

Binds 16S rRNA, required for the assembly of 30S particles and may also be responsible for determining the conformation of the 16S rRNA at the A site. This Neisseria meningitidis serogroup C / serotype 2a (strain ATCC 700532 / DSM 15464 / FAM18) protein is Small ribosomal subunit protein uS14.